The following is a 99-amino-acid chain: Large ribosomal subunit protein eL21 (99 aa).

Belongs to the eukaryotic ribosomal protein eL21 family.

This is Large ribosomal subunit protein eL21 from Ignicoccus hospitalis (strain KIN4/I / DSM 18386 / JCM 14125).